Consider the following 657-residue polypeptide: Transketolase (657 aa).

His31 serves as a coordination point for substrate. Thiamine diphosphate-binding positions include His71 and Gly120–Leu122. A Mg(2+)-binding site is contributed by Asp158. Thiamine diphosphate contacts are provided by Gly159 and Asn188. Mg(2+) contacts are provided by Asn188 and Ile190. Residues His262, Arg354, and Ser381 each contribute to the substrate site. Residue His262 coordinates thiamine diphosphate. Residue Glu408 is the Proton donor of the active site. A thiamine diphosphate-binding site is contributed by Phe434. 3 residues coordinate substrate: His458, Asp466, and Arg517.

Belongs to the transketolase family. In terms of assembly, homodimer. The cofactor is Mg(2+). Ca(2+) is required as a cofactor. Requires Mn(2+) as cofactor. It depends on Co(2+) as a cofactor. Thiamine diphosphate serves as cofactor.

It catalyses the reaction D-sedoheptulose 7-phosphate + D-glyceraldehyde 3-phosphate = aldehydo-D-ribose 5-phosphate + D-xylulose 5-phosphate. The protein operates within carbohydrate biosynthesis; Calvin cycle. It participates in carbohydrate degradation; pentose phosphate pathway. Catalyzes the transfer of a two-carbon ketol group from a ketose donor to an aldose acceptor, via a covalent intermediate with the cofactor thiamine pyrophosphate. The protein is Transketolase (tklB) of Cereibacter sphaeroides (Rhodobacter sphaeroides).